The following is a 543-amino-acid chain: RuBisCO large subunit-binding protein subunit alpha, chloroplastic (543 aa).

The transit peptide at 1–2 directs the protein to the chloroplast; sequence GA.

This sequence belongs to the chaperonin (HSP60) family. In terms of assembly, oligomer of probably six alpha and six beta subunits.

The protein resides in the plastid. The protein localises to the chloroplast. In terms of biological role, this protein binds RuBisCO small and large subunits and is implicated in the assembly of the enzyme oligomer. This chain is RuBisCO large subunit-binding protein subunit alpha, chloroplastic, found in Triticum aestivum (Wheat).